The following is a 677-amino-acid chain: Methionine--tRNA ligase (677 aa).

Residues 15 to 25 (PYANGSIHLGH) carry the 'HIGH' region motif. Zn(2+)-binding residues include Cys-146, Cys-149, Cys-159, and Cys-162. The 'KMSKS' region motif lies at 333–337 (KMSKS). Lys-336 is an ATP binding site. The tRNA-binding domain maps to 575–677 (DFAKVDLRVA…DGAKPGQQVK (103 aa)).

The protein belongs to the class-I aminoacyl-tRNA synthetase family. MetG type 1 subfamily. As to quaternary structure, homodimer. Zn(2+) is required as a cofactor.

Its subcellular location is the cytoplasm. The enzyme catalyses tRNA(Met) + L-methionine + ATP = L-methionyl-tRNA(Met) + AMP + diphosphate. Functionally, is required not only for elongation of protein synthesis but also for the initiation of all mRNA translation through initiator tRNA(fMet) aminoacylation. This chain is Methionine--tRNA ligase, found in Klebsiella pneumoniae subsp. pneumoniae (strain ATCC 700721 / MGH 78578).